The chain runs to 206 residues: Large ribosomal subunit protein uL4 (206 aa).

The segment at 63–98 (MYRQKGTGRARHSSARAPQFRGGGKAHGPVPHSHAH) is disordered. Positions 64-76 (YRQKGTGRARHSS) are enriched in basic residues.

The protein belongs to the universal ribosomal protein uL4 family. As to quaternary structure, part of the 50S ribosomal subunit.

One of the primary rRNA binding proteins, this protein initially binds near the 5'-end of the 23S rRNA. It is important during the early stages of 50S assembly. It makes multiple contacts with different domains of the 23S rRNA in the assembled 50S subunit and ribosome. In terms of biological role, forms part of the polypeptide exit tunnel. In Chelativorans sp. (strain BNC1), this protein is Large ribosomal subunit protein uL4.